A 626-amino-acid polypeptide reads, in one-letter code: tRNA uridine 5-carboxymethylaminomethyl modification enzyme MnmG (626 aa).

13-18 (GGGHAG) is a binding site for FAD. 273-287 (GPRYCPSIEDKIHRF) contacts NAD(+).

It belongs to the MnmG family. In terms of assembly, homodimer. Heterotetramer of two MnmE and two MnmG subunits. Requires FAD as cofactor.

It is found in the cytoplasm. NAD-binding protein involved in the addition of a carboxymethylaminomethyl (cmnm) group at the wobble position (U34) of certain tRNAs, forming tRNA-cmnm(5)s(2)U34. In Acinetobacter baumannii (strain SDF), this protein is tRNA uridine 5-carboxymethylaminomethyl modification enzyme MnmG.